Here is a 366-residue protein sequence, read N- to C-terminus: 3-dehydroquinate synthase (366 aa).

NAD(+)-binding positions include 75–80 (DGEEYK), 109–113 (GVVGD), 133–134 (TT), K146, K155, and 173–176 (TLDT). Residues E188, H251, and H268 each contribute to the Zn(2+) site.

This sequence belongs to the sugar phosphate cyclases superfamily. Dehydroquinate synthase family. It depends on Co(2+) as a cofactor. Zn(2+) serves as cofactor. Requires NAD(+) as cofactor.

It localises to the cytoplasm. It carries out the reaction 7-phospho-2-dehydro-3-deoxy-D-arabino-heptonate = 3-dehydroquinate + phosphate. It functions in the pathway metabolic intermediate biosynthesis; chorismate biosynthesis; chorismate from D-erythrose 4-phosphate and phosphoenolpyruvate: step 2/7. Its function is as follows. Catalyzes the conversion of 3-deoxy-D-arabino-heptulosonate 7-phosphate (DAHP) to dehydroquinate (DHQ). The polypeptide is 3-dehydroquinate synthase (Nitrosospira multiformis (strain ATCC 25196 / NCIMB 11849 / C 71)).